A 38-amino-acid polypeptide reads, in one-letter code: Large ribosomal subunit protein bL36 (38 aa).

The protein belongs to the bacterial ribosomal protein bL36 family.

This Buchnera aphidicola subsp. Schizaphis graminum (strain Sg) protein is Large ribosomal subunit protein bL36.